A 1073-amino-acid polypeptide reads, in one-letter code: Semaphorin-6D (1073 aa).

The signal sequence occupies residues 1 to 20 (MGFLLLWFCVLFLLVSRLRA). The Extracellular portion of the chain corresponds to 21 to 662 (VSFPEDDEPL…GESNQMVHMN (642 aa)). The Sema domain maps to 27 to 512 (DEPLNTVDYH…FSSCVVRIPL (486 aa)). Asn51 is a glycosylation site (N-linked (GlcNAc...) asparagine). Cystine bridges form between Cys108–Cys118, Cys136–Cys145, Cys259–Cys370, and Cys284–Cys329. The N-linked (GlcNAc...) asparagine glycan is linked to Asn283. 2 N-linked (GlcNAc...) asparagine glycosylation sites follow: Asn435 and Asn461. 4 cysteine pairs are disulfide-bonded: Cys477–Cys506, Cys515–Cys533, Cys521–Cys568, and Cys525–Cys541. Residues 514 to 569 (RCERYGSCKKSCIASRDPYCGWLSQGVCERVTLGMLPGGYEQDTEYGNTAHLGDCH) enclose the PSI domain. N-linked (GlcNAc...) asparagine glycosylation occurs at Asn631. The chain crosses the membrane as a helical span at residues 663 to 683 (VLITCVFAAFVLGAFIAGVAV). Topologically, residues 684 to 1073 (YCYRDMFVRK…SVRPLNKYTY (390 aa)) are cytoplasmic. Phosphoserine is present on residues Ser723, Ser734, and Ser744. Disordered regions lie at residues 745–825 (RKEL…GHIP), 839–876 (TSFSNSNAHKAEKKLQSMDHPLTKSSSKREHRRSVDSR), 919–986 (PPKV…SPNG), and 1021–1073 (LQPS…KYTY). At Thr773 the chain carries Phosphothreonine. Residues 790 to 806 (SHSEKAHSHGASRKEHP) are compositionally biased toward basic and acidic residues. Phosphoserine is present on residues Ser931, Ser957, and Ser983. Residues 931 to 942 (SPPSTLPRNSPT) show a composition bias toward polar residues. Composition is skewed to polar residues over residues 1021 to 1037 (LQPSLSRQSSYTSNGTL) and 1059 to 1073 (VPQTTSVRPLNKYTY).

The protein belongs to the semaphorin family. Expressed in brain and lung.

It is found in the cell membrane. Its function is as follows. Shows growth cone collapsing activity on dorsal root ganglion (DRG) neurons in vitro. May be a stop signal for the DRG neurons in their target areas, and possibly also for other neurons. May also be involved in the maintenance and remodeling of neuronal connections. Ligand of TREM2 with PLXNA1 as coreceptor in dendritic cells, plays a role in the generation of immune responses and skeletal homeostasis. In Mus musculus (Mouse), this protein is Semaphorin-6D (Sema6d).